The sequence spans 210 residues: Orotate phosphoribosyltransferase (210 aa).

5-phospho-alpha-D-ribose 1-diphosphate-binding positions include arginine 94, lysine 98, histidine 100, and 120 to 128; that span reads EDLISTGGS. Serine 124 contacts orotate.

It belongs to the purine/pyrimidine phosphoribosyltransferase family. PyrE subfamily. As to quaternary structure, homodimer. Mg(2+) serves as cofactor.

It catalyses the reaction orotidine 5'-phosphate + diphosphate = orotate + 5-phospho-alpha-D-ribose 1-diphosphate. Its pathway is pyrimidine metabolism; UMP biosynthesis via de novo pathway; UMP from orotate: step 1/2. Its function is as follows. Catalyzes the transfer of a ribosyl phosphate group from 5-phosphoribose 1-diphosphate to orotate, leading to the formation of orotidine monophosphate (OMP). The sequence is that of Orotate phosphoribosyltransferase from Bacillus cereus (strain ATCC 14579 / DSM 31 / CCUG 7414 / JCM 2152 / NBRC 15305 / NCIMB 9373 / NCTC 2599 / NRRL B-3711).